The primary structure comprises 444 residues: S-locus-specific glycoprotein (444 aa).

The N-terminal stretch at 1–28 is a signal peptide; that stretch reads MRGVIPNYHHSYTLFFFVILVLFPHVFS. In terms of domain architecture, Bulb-type lectin spans 31–159; the sequence is TLSPNEALTI…KTNDLDRFMW (129 aa). N-linked (GlcNAc...) asparagine glycosylation is found at Asn-43, Asn-125, Asn-243, and Asn-396. Residues 356–437 form the PAN domain; that stretch reads CGEGDGFLRM…GGQDLYVKVA (82 aa). 2 cysteine pairs are disulfide-bonded: Cys-387–Cys-412 and Cys-395–Cys-397.

As to expression, stigma.

Its function is as follows. Involved in sporophytic self-incompatibility system (the inability of flowering plants to achieve self-fertilization). This is S-locus-specific glycoprotein (SLSG) from Brassica oleracea var. alboglabra (Chinese kale).